The primary structure comprises 693 residues: Homoaconitase, mitochondrial (693 aa).

The N-terminal 17 residues, 1–17, are a transit peptide targeting the mitochondrion; that stretch reads MFRVQRLRMFSTSRALY. 3 residues coordinate [4Fe-4S] cluster: C338, C405, and C408.

The protein belongs to the aconitase/IPM isomerase family. [4Fe-4S] cluster serves as cofactor.

It is found in the mitochondrion. It carries out the reaction (2R,3S)-homoisocitrate = cis-homoaconitate + H2O. Its pathway is amino-acid biosynthesis; L-lysine biosynthesis via AAA pathway; L-alpha-aminoadipate from 2-oxoglutarate: step 3/5. Its function is as follows. Catalyzes the reversible hydration of cis-homoaconitate to (2R,3S)-homoisocitrate, a step in the alpha-aminoadipate pathway for lysine biosynthesis. The polypeptide is Homoaconitase, mitochondrial (LYS4) (Kluyveromyces lactis (strain ATCC 8585 / CBS 2359 / DSM 70799 / NBRC 1267 / NRRL Y-1140 / WM37) (Yeast)).